The following is a 787-amino-acid chain: Aminodeoxychorismate synthase (787 aa).

A Glutamine amidotransferase type-1 domain is found at 16-233; that stretch reads HVLFIDSYDS…LKLSFINNVK (218 aa). Residues Cys112, His207, and Glu209 contribute to the active site. The tract at residues 304–787 is PABB component; the sequence is MSSSVISENT…KLESNLQIFM (484 aa).

This sequence in the C-terminal section; belongs to the anthranilate synthase component I family.

The protein localises to the cytoplasm. It carries out the reaction chorismate + L-glutamine = 4-amino-4-deoxychorismate + L-glutamate. It functions in the pathway cofactor biosynthesis; tetrahydrofolate biosynthesis; 4-aminobenzoate from chorismate: step 1/2. Its function is as follows. Catalyzes the biosynthesis of 4-amino-4-deoxychorismate (ADC) from chorismate and glutamine. Required for the synthesis of 4-aminobenzoate (PABA), an important component in tetrahydrofolate biosynthesis. This Saccharomyces cerevisiae (strain ATCC 204508 / S288c) (Baker's yeast) protein is Aminodeoxychorismate synthase (ABZ1).